A 481-amino-acid polypeptide reads, in one-letter code: Membrane-bound lytic murein transglycosylase F (481 aa).

A signal peptide spans Met1–Ala21. Residues Leu22 to Val268 form a non-LT domain region. The segment at Gly269–Glu481 is LT domain. The active site involves Glu313.

This sequence in the N-terminal section; belongs to the bacterial solute-binding protein 3 family. It in the C-terminal section; belongs to the transglycosylase Slt family.

The protein localises to the cell outer membrane. It catalyses the reaction Exolytic cleavage of the (1-&gt;4)-beta-glycosidic linkage between N-acetylmuramic acid (MurNAc) and N-acetylglucosamine (GlcNAc) residues in peptidoglycan, from either the reducing or the non-reducing ends of the peptidoglycan chains, with concomitant formation of a 1,6-anhydrobond in the MurNAc residue.. Murein-degrading enzyme that degrades murein glycan strands and insoluble, high-molecular weight murein sacculi, with the concomitant formation of a 1,6-anhydromuramoyl product. Lytic transglycosylases (LTs) play an integral role in the metabolism of the peptidoglycan (PG) sacculus. Their lytic action creates space within the PG sacculus to allow for its expansion as well as for the insertion of various structures such as secretion systems and flagella. The chain is Membrane-bound lytic murein transglycosylase F from Pectobacterium atrosepticum (strain SCRI 1043 / ATCC BAA-672) (Erwinia carotovora subsp. atroseptica).